Here is a 521-residue protein sequence, read N- to C-terminus: U4/U6 small nuclear ribonucleoprotein Prp4 (521 aa).

The residue at position 26 (Lys26) is an N6-acetyllysine. 7 WD repeats span residues 229 to 268, 271 to 318, 321 to 360, 363 to 402, 405 to 444, 447 to 487, and 490 to 521; these read DDRPISYCHFSPNSKMLATACWSGLCKLWSVPDCNLLHTL, HNTN…VADI, HTVRVARVTWHPSGRFLGTTCYDRSWRLWDLEAQEEILHQ, HSMGVYDIAFHQDGSLAGTGGLDAFGRVWDLRTGRCIMFL, HLKEIYGINFSPNGYHIATGSGDNTCKVWDLRQRRCVYTI, HQNL…LKTL, and HEGKVMGLDISSDGQLIATCSYDRTFKLWMAE.

Component of the precatalytic spliceosome (spliceosome B complex). Component of the U4/U6-U5 tri-snRNP complex, a building block of the precatalytic spliceosome (spliceosome B complex). The U4/U6-U5 tri-snRNP complex is composed of the U4, U6 and U5 snRNAs and at least PRPF3, PRPF4, PRPF6, PRPF8, PRPF31, SNRNP200, TXNL4A, SNRNP40, SNRPB, SNRPD1, SNRPD2, SNRPD3, SNRPE, SNRPF, SNRPG, DDX23, CD2BP2, PPIH, SNU13, EFTUD2, SART1 and USP39, plus LSM2, LSM3, LSM4, LSM5, LSM6, LSM7 and LSM8. Interacts directly with PRPF18, PPIH and PRPF3. Part of a heteromeric complex containing PPIH, PRPF3 and PRPF4 that is stable in the absence of RNA. Interacts with ERCC6.

It is found in the nucleus. It localises to the nucleus speckle. Its function is as follows. Plays a role in pre-mRNA splicing as component of the U4/U6-U5 tri-snRNP complex that is involved in spliceosome assembly, and as component of the precatalytic spliceosome (spliceosome B complex). The sequence is that of U4/U6 small nuclear ribonucleoprotein Prp4 (PRPF4) from Bos taurus (Bovine).